A 291-amino-acid chain; its full sequence is 4-diphosphocytidyl-2-C-methyl-D-erythritol kinase (291 aa).

Lysine 8 is an active-site residue. An ATP-binding site is contributed by 89–99; the sequence is PIGSGIGGGSS. Residue aspartate 131 is part of the active site.

It belongs to the GHMP kinase family. IspE subfamily.

The catalysed reaction is 4-CDP-2-C-methyl-D-erythritol + ATP = 4-CDP-2-C-methyl-D-erythritol 2-phosphate + ADP + H(+). The protein operates within isoprenoid biosynthesis; isopentenyl diphosphate biosynthesis via DXP pathway; isopentenyl diphosphate from 1-deoxy-D-xylulose 5-phosphate: step 3/6. Functionally, catalyzes the phosphorylation of the position 2 hydroxy group of 4-diphosphocytidyl-2C-methyl-D-erythritol. The polypeptide is 4-diphosphocytidyl-2-C-methyl-D-erythritol kinase (Chlamydia abortus (strain DSM 27085 / S26/3) (Chlamydophila abortus)).